The chain runs to 179 residues: ATP synthase subunit delta (179 aa).

This sequence belongs to the ATPase delta chain family. F-type ATPases have 2 components, F(1) - the catalytic core - and F(0) - the membrane proton channel. F(1) has five subunits: alpha(3), beta(3), gamma(1), delta(1), epsilon(1). F(0) has three main subunits: a(1), b(2) and c(10-14). The alpha and beta chains form an alternating ring which encloses part of the gamma chain. F(1) is attached to F(0) by a central stalk formed by the gamma and epsilon chains, while a peripheral stalk is formed by the delta and b chains.

The protein resides in the cell inner membrane. Functionally, f(1)F(0) ATP synthase produces ATP from ADP in the presence of a proton or sodium gradient. F-type ATPases consist of two structural domains, F(1) containing the extramembraneous catalytic core and F(0) containing the membrane proton channel, linked together by a central stalk and a peripheral stalk. During catalysis, ATP synthesis in the catalytic domain of F(1) is coupled via a rotary mechanism of the central stalk subunits to proton translocation. In terms of biological role, this protein is part of the stalk that links CF(0) to CF(1). It either transmits conformational changes from CF(0) to CF(1) or is implicated in proton conduction. This is ATP synthase subunit delta from Anaeromyxobacter dehalogenans (strain 2CP-1 / ATCC BAA-258).